A 331-amino-acid polypeptide reads, in one-letter code: Geranylgeranyl transferase type-2 subunit beta (331 aa).

Residue Gly-2 is modified to N-acetylglycine. Thr-3 carries the post-translational modification Phosphothreonine. PFTB repeat units follow at residues 20–61, 68–109, 116–157, 164–205, 212–253, and 260–302; these read LEKH…DLMG, REEI…TLYD, VNKV…ALLG, VEKA…AITS, SDLL…KIIG, and REKL…SLLG. 190-192 contacts geranylgeranyl diphosphate; sequence HAG. Zn(2+)-binding residues include Asp-238 and Cys-240. 241–244 lines the geranylgeranyl diphosphate pocket; the sequence is YSWW. His-290 provides a ligand contact to Zn(2+).

This sequence belongs to the protein prenyltransferase subunit beta family. In terms of assembly, heterotrimer composed of RABGGTA, RABGGTB and CHM; within this trimer, RABGGTA and RABGGTB form the catalytic component B, while CHM (component A) mediates peptide substrate binding. The Rab GGTase dimer (RGGT) interacts with CHM (component A) prior to Rab protein binding; the association is stabilized by geranylgeranyl pyrophosphate (GGpp). The CHM:RGGT:Rab complex is destabilized by GGpp. Interaction of RABGGTB with prenylated PTP4A2 precludes its association with RABGGTA and inhibits enzyme activity. Interacts with CHODL. Interacts with non-phosphorylated form of RAB8A; phosphorylation of RAB8A at 'Thr-72' disrupts this interaction. The cofactor is Zn(2+).

It carries out the reaction geranylgeranyl diphosphate + L-cysteinyl-[protein] = S-geranylgeranyl-L-cysteinyl-[protein] + diphosphate. The enzymatic reaction requires the aid of a Rab escort protein (also called component A). Functionally, catalyzes the transfer of a geranylgeranyl moiety from geranylgeranyl diphosphate to both cysteines of Rab proteins with the C-terminal sequence -XXCC, -XCXC and -CCXX, such as RAB1A, RAB3A, RAB5A and RAB7A. The polypeptide is Geranylgeranyl transferase type-2 subunit beta (RABGGTB) (Homo sapiens (Human)).